Here is a 540-residue protein sequence, read N- to C-terminus: Testis-specific chromodomain protein Y 1 (540 aa).

Residues 6 to 66 (FEVEAIVDKR…RQTEKQKKLT (61 aa)) enclose the Chromo domain. Positions 76–106 (NNARRRTSRSTKANYSKNSPKTPVTDKHHRS) are disordered. Residues 87–97 (KANYSKNSPKT) show a composition bias toward polar residues.

As to quaternary structure, interacts (via chromo domain) with histone H3K9me3. Testis-specific. Detected in spermatids (at protein level).

It is found in the nucleus. The catalysed reaction is L-lysyl-[protein] + acetyl-CoA = N(6)-acetyl-L-lysyl-[protein] + CoA + H(+). In terms of biological role, has histone acetyltransferase activity, with a preference for histone H4. This chain is Testis-specific chromodomain protein Y 1 (CDY1), found in Homo sapiens (Human).